A 98-amino-acid chain; its full sequence is uncharacterized protein (98 aa).

The STAS domain occupies 1–85 (MLETVPVRCV…GTLKQALENM (85 aa)).

In terms of processing, phosphorylated on threonine residue(s). Phosphorylated by PrkC and dephosphorylated by PrpC.

The protein resides in the cytoplasm. This is an uncharacterized protein from Bacillus subtilis (strain 168).